The following is a 194-amino-acid chain: Large ribosomal subunit protein bL25 (194 aa).

It belongs to the bacterial ribosomal protein bL25 family. CTC subfamily. As to quaternary structure, part of the 50S ribosomal subunit; part of the 5S rRNA/L5/L18/L25 subcomplex. Contacts the 5S rRNA. Binds to the 5S rRNA independently of L5 and L18.

This is one of the proteins that binds to the 5S RNA in the ribosome where it forms part of the central protuberance. This Geotalea uraniireducens (strain Rf4) (Geobacter uraniireducens) protein is Large ribosomal subunit protein bL25.